The sequence spans 417 residues: MLNNKIDFSKYDPKLWFAIEQEKKRQENHIELIASENYTSNYVMDVQGSQLTNKYAEGYPGKRYYGGCEYVDIIEELAIERAKKLFNADYANVQPHSGSQANFSVYTALLNPGDTILGMKLSHGGHLTHGSSVNFSGKMYNVISYGVDENGEINYEELLRLTKKYKPKMIIGGFSAYSGICNWKKMRFIADNADAYFVVDMAHVAGLVAAGIYPNPINYAHVVTSTTHKTLAGPRGGLILAKNGDDILYKKLNLSVFPGAQGGPLMHVIAAKAIAFKEALEPKFKTYQKQIVKNSKVMVERFLEKGYKIISGHTFNHLFLIDLTNKKITGKDADIILSKANITVNKNTIPNDLKSPFITSGIRIGTAAVTRRGFKENEVSRISDWITSILNNVDDHNNVLQIKKKVLEMCLKYPVYI.

(6S)-5,6,7,8-tetrahydrofolate contacts are provided by residues Leu121 and 125–127 (GHL). Lys229 carries the N6-(pyridoxal phosphate)lysine modification. 355–357 (SPF) contributes to the (6S)-5,6,7,8-tetrahydrofolate binding site.

This sequence belongs to the SHMT family. As to quaternary structure, homodimer. Requires pyridoxal 5'-phosphate as cofactor.

The protein resides in the cytoplasm. The catalysed reaction is (6R)-5,10-methylene-5,6,7,8-tetrahydrofolate + glycine + H2O = (6S)-5,6,7,8-tetrahydrofolate + L-serine. Its pathway is one-carbon metabolism; tetrahydrofolate interconversion. The protein operates within amino-acid biosynthesis; glycine biosynthesis; glycine from L-serine: step 1/1. In terms of biological role, catalyzes the reversible interconversion of serine and glycine with tetrahydrofolate (THF) serving as the one-carbon carrier. This reaction serves as the major source of one-carbon groups required for the biosynthesis of purines, thymidylate, methionine, and other important biomolecules. Also exhibits THF-independent aldolase activity toward beta-hydroxyamino acids, producing glycine and aldehydes, via a retro-aldol mechanism. This Buchnera aphidicola subsp. Acyrthosiphon pisum (strain APS) (Acyrthosiphon pisum symbiotic bacterium) protein is Serine hydroxymethyltransferase.